The primary structure comprises 249 residues: NAD kinase (249 aa).

The Proton acceptor role is filled by aspartate 45. NAD(+) is bound by residues 45-46 (DG), arginine 50, 110-111 (NE), aspartate 138, and 149-154 (SGWGMS).

The protein belongs to the NAD kinase family. The cofactor is a divalent metal cation.

It is found in the cytoplasm. It catalyses the reaction NAD(+) + ATP = ADP + NADP(+) + H(+). Involved in the regulation of the intracellular balance of NAD and NADP, and is a key enzyme in the biosynthesis of NADP. Catalyzes specifically the phosphorylation on 2'-hydroxyl of the adenosine moiety of NAD to yield NADP. The polypeptide is NAD kinase (Saccharolobus solfataricus (strain ATCC 35092 / DSM 1617 / JCM 11322 / P2) (Sulfolobus solfataricus)).